We begin with the raw amino-acid sequence, 339 residues long: DNA-directed RNA polymerase subunit alpha (339 aa).

Residues 1-233 (MVREEVAGST…DLFLPFLHAE (233 aa)) form an alpha N-terminal domain (alpha-NTD) region. An alpha C-terminal domain (alpha-CTD) region spans residues 264 to 339 (KKGIPLNCIF…IDLLKNKLSF (76 aa)).

The protein belongs to the RNA polymerase alpha chain family. In terms of assembly, in plastids the minimal PEP RNA polymerase catalytic core is composed of four subunits: alpha, beta, beta', and beta''. When a (nuclear-encoded) sigma factor is associated with the core the holoenzyme is formed, which can initiate transcription.

The protein resides in the plastid. It localises to the chloroplast. The enzyme catalyses RNA(n) + a ribonucleoside 5'-triphosphate = RNA(n+1) + diphosphate. Its function is as follows. DNA-dependent RNA polymerase catalyzes the transcription of DNA into RNA using the four ribonucleoside triphosphates as substrates. The chain is DNA-directed RNA polymerase subunit alpha from Festucopsis serpentini.